A 591-amino-acid chain; its full sequence is Paralemmin-3 (591 aa).

4 consecutive repeats follow at residues 171–174 (EKNK), 183–186 (EKNQ), 224–227 (EKNQ), and 234–237 (KNQD). Polar residues predominate over residues 282–293 (DQTQSTSDQNME). Disordered stretches follow at residues 282-317 (DQTQ…TKDQ), 332-413 (KGTT…QNQD), and 515-591 (PDLK…CVVM). Composition is skewed to basic and acidic residues over residues 306–317 (SQSEGKIQTKDQ) and 349–383 (EPKE…DMDP). Polar residues-rich tracts occupy residues 385–413 (QLST…QNQD) and 528–542 (QESS…TIAQ). Positions 543–554 (SSSAEGNSSPES) are enriched in low complexity. A compositionally biased stretch (polar residues) spans 559 to 575 (QKSQGTDSQQGGNTATQ). Positions 579-583 (RRKKK) match the Nuclear localization signal motif. Residues Cys585 and Cys587 are each lipidated (S-palmitoyl cysteine). Position 588 is a cysteine methyl ester (Cys588). A lipid anchor (S-farnesyl cysteine) is attached at Cys588. Positions 589 to 591 (VVM) are cleaved as a propeptide — removed in mature form.

This sequence belongs to the paralemmin family. Post-translationally, may be phosphorylated during oocyte maturation. Palmitoylated on Cys-585 and Cys-587 and prenylated on Cys-588; which is required for membrane association. In Xenopus oocyte, in the central nervous system cells of tadpoles and adult frogs, and transiently in epithelial cells of stomach and gut of tadpoles. Highly expressed in kidney.

It localises to the cytoplasm. The protein localises to the nucleus. The protein resides in the cell membrane. Functionally, maternal ATP-binding protein that may have multiple functions during development, one of which may be associated with the development and maintenance of the central nervous system. The polypeptide is Paralemmin-3 (palm3) (Xenopus laevis (African clawed frog)).